Consider the following 323-residue polypeptide: Large ribosomal subunit protein uL10x (323 aa).

The segment at 287 to 323 is disordered; sequence DAGGGSAQAGAAAKVEEKKEESDEEDYEGGFGLFDEE. Serine 308 carries the phosphoserine modification. Residues 308–323 are compositionally biased toward acidic residues; that stretch reads SDEEDYEGGFGLFDEE. At tyrosine 313 the chain carries Phosphotyrosine.

It belongs to the universal ribosomal protein uL10 family. As to quaternary structure, P0 forms a pentameric complex by interaction with dimers of P1 and P2.

Ribosomal protein P0 is the functional equivalent of E.coli protein L10. In Arabidopsis thaliana (Mouse-ear cress), this protein is Large ribosomal subunit protein uL10x (RPP0C).